Consider the following 521-residue polypeptide: Aldehyde dehydrogenase, mitochondrial (521 aa).

The transit peptide at 1–21 (MLRPAALAAARLVLRQGRRLL) directs the protein to the mitochondrion. An SIFI-degron motif is present at residues 13-28 (VLRQGRRLLSAAPTQA). N6-acetyllysine occurs at positions 56, 77, and 163. 266–271 (GSTEVG) provides a ligand contact to NAD(+). The active-site Proton acceptor is the Glu-289. Catalysis depends on Cys-323, which acts as the Nucleophile. N6-acetyllysine occurs at positions 372, 379, 387, 430, 432, 445, and 455.

Belongs to the aldehyde dehydrogenase family. As to quaternary structure, homotetramer. In response to mitochondrial stress, the precursor protein is ubiquitinated by the SIFI complex in the cytoplasm before mitochondrial import, leading to its degradation. Within the SIFI complex, UBR4 initiates ubiquitin chain that are further elongated or branched by KCMF1.

It localises to the mitochondrion matrix. The catalysed reaction is an aldehyde + NAD(+) + H2O = a carboxylate + NADH + 2 H(+). The protein operates within alcohol metabolism; ethanol degradation; acetate from ethanol: step 2/2. Its function is as follows. Required for clearance of cellular formaldehyde, a cytotoxic and carcinogenic metabolite that induces DNA damage. The protein is Aldehyde dehydrogenase, mitochondrial (ALDH2) of Sus scrofa (Pig).